We begin with the raw amino-acid sequence, 1373 residues long: DNA-directed RNA polymerase subunit beta (1373 aa).

The protein belongs to the RNA polymerase beta chain family. In terms of assembly, the RNAP catalytic core consists of 2 alpha, 1 beta, 1 beta' and 1 omega subunit. When a sigma factor is associated with the core the holoenzyme is formed, which can initiate transcription.

It carries out the reaction RNA(n) + a ribonucleoside 5'-triphosphate = RNA(n+1) + diphosphate. Its function is as follows. DNA-dependent RNA polymerase catalyzes the transcription of DNA into RNA using the four ribonucleoside triphosphates as substrates. This Rickettsia peacockii (strain Rustic) protein is DNA-directed RNA polymerase subunit beta.